The chain runs to 381 residues: Alcohol dehydrogenase class-3 (381 aa).

C49 lines the Zn(2+) pocket. H50 is a binding site for NAD(+). An alcohol contacts are provided by T51 and H71. 7 residues coordinate Zn(2+): H71, E72, C101, C104, C107, C115, and C179. Residues 204 to 209 (GLGTVG), D228, K233, I274, 297 to 299 (VGV), 322 to 324 (TAF), and R374 each bind NAD(+).

The protein belongs to the zinc-containing alcohol dehydrogenase family. Class-III subfamily. As to quaternary structure, homodimer. Zn(2+) is required as a cofactor. In terms of tissue distribution, expressed at low levels in the leaves.

It is found in the cytoplasm. It carries out the reaction a primary alcohol + NAD(+) = an aldehyde + NADH + H(+). The catalysed reaction is a secondary alcohol + NAD(+) = a ketone + NADH + H(+). The enzyme catalyses S-(hydroxymethyl)glutathione + NADP(+) = S-formylglutathione + NADPH + H(+). It catalyses the reaction S-(hydroxymethyl)glutathione + NAD(+) = S-formylglutathione + NADH + H(+). In Zea mays (Maize), this protein is Alcohol dehydrogenase class-3 (FDH).